Here is a 413-residue protein sequence, read N- to C-terminus: Putative competence-damage inducible protein (413 aa).

Belongs to the CinA family.

In Thermoanaerobacter pseudethanolicus (strain ATCC 33223 / 39E) (Clostridium thermohydrosulfuricum), this protein is Putative competence-damage inducible protein.